We begin with the raw amino-acid sequence, 333 residues long: Cell division protein FtsQ (333 aa).

Residues 1–99 (MTGTGPHGDP…ARREAKRRAV (99 aa)) form a disordered region. The Cytoplasmic segment spans residues 1-118 (MTGTGPHGDP…VPRNTIRGLK (118 aa)). Residues 11 to 22 (AEDPAGPDDTAA) are compositionally biased toward acidic residues. Residues 44 to 57 (TTETTAQTGTTAEA) are compositionally biased toward low complexity. Basic and acidic residues predominate over residues 73–92 (ERAERRAARDRAMAIEQARR). A helical membrane pass occupies residues 119-139 (VLMWAALVSVLAVALGLLLYF). Topologically, residues 140–333 (TPIMSARNVE…VSSPDLPTVK (194 aa)) are extracellular. A POTRA domain is found at 143-211 (MSARNVEVSG…STLKISIVER (69 aa)).

This sequence belongs to the FtsQ/DivIB family. FtsQ subfamily.

The protein resides in the cell membrane. Its function is as follows. Essential cell division protein. The chain is Cell division protein FtsQ from Mycolicibacterium smegmatis (strain ATCC 700084 / mc(2)155) (Mycobacterium smegmatis).